A 55-amino-acid chain; its full sequence is MAKPATIKIRLNSTADTGFFYVTKKNPRTMTEKMVQRKYDPVAKKHVEFKEGKIK.

This sequence belongs to the bacterial ribosomal protein bL33 family.

In Hyphomonas neptunium (strain ATCC 15444), this protein is Large ribosomal subunit protein bL33.